Here is a 363-residue protein sequence, read N- to C-terminus: 5-formaminoimidazole-4-carboxamide-1-(beta)-D-ribofuranosyl 5'-monophosphate synthetase (363 aa).

Residues His29 and Ser96 each coordinate 5-amino-1-(5-phospho-beta-D-ribosyl)imidazole-4-carboxamide. The ATP-grasp domain occupies Arg118 to Arg350. Residues Pro148–Cys210 and Glu232 each bind ATP. Asn260 contacts 5-amino-1-(5-phospho-beta-D-ribosyl)imidazole-4-carboxamide. Mg(2+)-binding residues include Gln299 and Glu312.

This sequence belongs to the phosphohexose mutase family. Requires Mg(2+) as cofactor. The cofactor is Mn(2+).

The catalysed reaction is 5-amino-1-(5-phospho-beta-D-ribosyl)imidazole-4-carboxamide + formate + ATP = 5-formamido-1-(5-phospho-D-ribosyl)imidazole-4-carboxamide + ADP + phosphate. It participates in purine metabolism; IMP biosynthesis via de novo pathway; 5-formamido-1-(5-phospho-D-ribosyl)imidazole-4-carboxamide from 5-amino-1-(5-phospho-D-ribosyl)imidazole-4-carboxamide (formate route): step 1/1. Functionally, catalyzes the ATP- and formate-dependent formylation of 5-aminoimidazole-4-carboxamide-1-beta-d-ribofuranosyl 5'-monophosphate (AICAR) to 5-formaminoimidazole-4-carboxamide-1-beta-d-ribofuranosyl 5'-monophosphate (FAICAR) in the absence of folates. The chain is 5-formaminoimidazole-4-carboxamide-1-(beta)-D-ribofuranosyl 5'-monophosphate synthetase from Methanothermobacter thermautotrophicus (strain ATCC 29096 / DSM 1053 / JCM 10044 / NBRC 100330 / Delta H) (Methanobacterium thermoautotrophicum).